A 539-amino-acid polypeptide reads, in one-letter code: Phosphoenolpyruvate carboxykinase (ATP) (539 aa).

Residues arginine 64, tyrosine 206, and lysine 212 each coordinate substrate. ATP-binding positions include lysine 212, histidine 231, and 247–255 (GLSGTGKTT). Positions 212 and 231 each coordinate Mn(2+). Aspartate 268 contacts Mn(2+). ATP is bound by residues glutamate 296, arginine 332, 448–449 (RI), and threonine 454. A substrate-binding site is contributed by arginine 332.

It belongs to the phosphoenolpyruvate carboxykinase (ATP) family. In terms of assembly, monomer. Mn(2+) is required as a cofactor.

The protein resides in the cytoplasm. The enzyme catalyses oxaloacetate + ATP = phosphoenolpyruvate + ADP + CO2. It functions in the pathway carbohydrate biosynthesis; gluconeogenesis. Involved in the gluconeogenesis. Catalyzes the conversion of oxaloacetate (OAA) to phosphoenolpyruvate (PEP) through direct phosphoryl transfer between the nucleoside triphosphate and OAA. The polypeptide is Phosphoenolpyruvate carboxykinase (ATP) (Pectobacterium atrosepticum (strain SCRI 1043 / ATCC BAA-672) (Erwinia carotovora subsp. atroseptica)).